The following is a 321-amino-acid chain: Aspartate carbamoyltransferase catalytic subunit (321 aa).

Carbamoyl phosphate-binding residues include R60 and T61. K88 provides a ligand contact to L-aspartate. Carbamoyl phosphate-binding residues include R110, H138, and Q141. L-aspartate is bound by residues R171 and R225. Residues G266 and P267 each coordinate carbamoyl phosphate.

This sequence belongs to the aspartate/ornithine carbamoyltransferase superfamily. ATCase family. Heterododecamer (2C3:3R2) of six catalytic PyrB chains organized as two trimers (C3), and six regulatory PyrI chains organized as three dimers (R2).

It catalyses the reaction carbamoyl phosphate + L-aspartate = N-carbamoyl-L-aspartate + phosphate + H(+). The protein operates within pyrimidine metabolism; UMP biosynthesis via de novo pathway; (S)-dihydroorotate from bicarbonate: step 2/3. Its function is as follows. Catalyzes the condensation of carbamoyl phosphate and aspartate to form carbamoyl aspartate and inorganic phosphate, the committed step in the de novo pyrimidine nucleotide biosynthesis pathway. The chain is Aspartate carbamoyltransferase catalytic subunit from Sorangium cellulosum (strain So ce56) (Polyangium cellulosum (strain So ce56)).